Consider the following 704-residue polypeptide: MDHITVPKVENVKLVDRYVSKKPANGILYLTATHLIYVEASGAARKETWIALHHIATVEKLPITSLGCPLTLRCKNFRVAHFVLDSDLVCHEVYISLLKLSQPALPEDLYAFSYNPKSSKEMRESGWKLIDPISDFGRMGIPNRNWTITDANRNYEICSTYPPEIVVPKSVTLGTVVGSSKFRSKERVPVLSYLYKENNAAICRCSQPLSGFYTRCVDDELLLEAISQTNPGSQFMYVVDTRPKLNAMANRAAGKGYENEDNYANIRFRFMGIENIHVMRSSLQKLLEVCELKTPTMSEFLSGLESSGWLRHIKAIMDAGIFITKAVKVEKASVLVHCSDGWDRTAQVCSVASILLDPFYRTFKGLMILIEKEWISMGHKFSQRCGHLDGDSKEVSPIFTQFLDCIWQLMEQFPCAFEFNENFLLEIHDHVFSCQFGNFLGNCQKDREDLRVYEKTHSVWPFLVQRKPDFRNPLYKGFTMYGVLNPSTVPYNIQFWCGMYNRFDKGLQPKQSMLESLLEIKKQRAMLETDVHELEKKLKVRDEPPEEICTCSQLGNILSQHLGSPLTNPLGFMGINGDLNTLMENGTLSREGGLRAQMDQVKSQGADLHHNCCEIVGSLRAINISGDVGISEAMGISGDMCTFEATGFSKDLGICGAMDISEATGISGNLGISEARGFSGDMGILGDTGISKASTKEADYSKHQ.

The Myotubularin phosphatase domain occupies 126–500 (GWKLIDPISD…YNIQFWCGMY (375 aa)). Positions 250, 275, and 276 each coordinate a 1,2-diacyl-sn-glycero-3-phospho-(1D-myo-inositol-3,5-bisphosphate). A 1,2-diacyl-sn-glycero-3-phospho-(1D-myo-inositol-3-phosphate) contacts are provided by asparagine 250, asparagine 275, and isoleucine 276. The Phosphocysteine intermediate role is filled by cysteine 338. Positions 339, 340, 341, 342, 343, 344, 380, and 384 each coordinate a 1,2-diacyl-sn-glycero-3-phospho-(1D-myo-inositol-3,5-bisphosphate). Positions 339, 340, 341, 342, 343, and 344 each coordinate a 1,2-diacyl-sn-glycero-3-phospho-(1D-myo-inositol-3-phosphate). Residues serine 339 and aspartate 340 each contribute to the phosphate site. Phosphate contacts are provided by tryptophan 342, aspartate 343, and arginine 344. Arginine 384 provides a ligand contact to a 1,2-diacyl-sn-glycero-3-phospho-(1D-myo-inositol-3-phosphate). The stretch at 515–541 (ESLLEIKKQRAMLETDVHELEKKLKVR) forms a coiled coil.

It belongs to the protein-tyrosine phosphatase family. Non-receptor class myotubularin subfamily. In terms of assembly, homodimer. Heterodimer with MTMR9.

The protein localises to the nucleus envelope. It carries out the reaction a 1,2-diacyl-sn-glycero-3-phospho-(1D-myo-inositol-3,5-bisphosphate) + H2O = a 1,2-diacyl-sn-glycero-3-phospho-(1D-myo-inositol-5-phosphate) + phosphate. The enzyme catalyses a 1,2-diacyl-sn-glycero-3-phospho-(1D-myo-inositol-3-phosphate) + H2O = a 1,2-diacyl-sn-glycero-3-phospho-(1D-myo-inositol) + phosphate. The catalysed reaction is 1,2-dioctanoyl-sn-glycero-3-phospho-(1D-myo-inositol-3,5-bisphosphate) + H2O = 1,2-dioctanoyl-sn-glycero-3-phospho-(1D-myo-inositol-5-phosphate) + phosphate. Its activity is regulated as follows. Interaction with MTMR9 increases phosphatase activity. Lipid phosphatase that specifically dephosphorylates the D-3 position of phosphatidylinositol 3-phosphate and phosphatidylinositol 3,5-bisphosphate, generating phosphatidylinositol and phosphatidylinositol 5-phosphate. In complex with MTMR9, negatively regulates autophagy. The sequence is that of Phosphatidylinositol-3,5-bisphosphate 3-phosphatase MTMR8 from Homo sapiens (Human).